The sequence spans 434 residues: D-amino acid dehydrogenase (434 aa).

3-17 (VVILGSGVVGVTSAW) provides a ligand contact to FAD.

This sequence belongs to the DadA oxidoreductase family. FAD is required as a cofactor.

The enzyme catalyses a D-alpha-amino acid + A + H2O = a 2-oxocarboxylate + AH2 + NH4(+). Its pathway is amino-acid degradation; D-alanine degradation; NH(3) and pyruvate from D-alanine: step 1/1. Oxidative deamination of D-amino acids. This Yersinia pseudotuberculosis serotype O:1b (strain IP 31758) protein is D-amino acid dehydrogenase.